A 206-amino-acid chain; its full sequence is LOB domain-containing protein 35 (206 aa).

Positions 4–105 (TCCSACKVMK…EQINSAKNEL (102 aa)) constitute an LOB domain. Residues 184-206 (ASTSGGTSATQKTLPFPQNHNQP) form a disordered region.

It belongs to the LOB domain-containing protein family.

The chain is LOB domain-containing protein 35 (LBD35) from Arabidopsis thaliana (Mouse-ear cress).